Here is a 565-residue protein sequence, read N- to C-terminus: Arginine--tRNA ligase (565 aa).

The 'HIGH' region motif lies at 120 to 130 (PNIAKPFHVGH).

It belongs to the class-I aminoacyl-tRNA synthetase family. Monomer.

The protein resides in the cytoplasm. The catalysed reaction is tRNA(Arg) + L-arginine + ATP = L-arginyl-tRNA(Arg) + AMP + diphosphate. The protein is Arginine--tRNA ligase of Clostridium perfringens (strain 13 / Type A).